A 35-amino-acid polypeptide reads, in one-letter code: Photosystem II reaction center protein T (35 aa).

The helical transmembrane segment at 3–23 (ALVYTFLLVSTLGIIFFAIFF) threads the bilayer.

Belongs to the PsbT family. In terms of assembly, PSII is composed of 1 copy each of membrane proteins PsbA, PsbB, PsbC, PsbD, PsbE, PsbF, PsbH, PsbI, PsbJ, PsbK, PsbL, PsbM, PsbT, PsbY, PsbZ, Psb30/Ycf12, at least 3 peripheral proteins of the oxygen-evolving complex and a large number of cofactors. It forms dimeric complexes.

Its subcellular location is the plastid. The protein resides in the chloroplast thylakoid membrane. In terms of biological role, found at the monomer-monomer interface of the photosystem II (PS II) dimer, plays a role in assembly and dimerization of PSII. PSII is a light-driven water plastoquinone oxidoreductase, using light energy to abstract electrons from H(2)O, generating a proton gradient subsequently used for ATP formation. In Pisum sativum (Garden pea), this protein is Photosystem II reaction center protein T.